The chain runs to 238 residues: Orotidine 5'-phosphate decarboxylase (238 aa).

Substrate is bound by residues aspartate 10, lysine 32, 59–68 (DLKLHDIPNT), threonine 122, arginine 184, glutamine 193, glycine 213, and arginine 214. Residue lysine 61 is the Proton donor of the active site.

It belongs to the OMP decarboxylase family. Type 1 subfamily. In terms of assembly, homodimer.

The catalysed reaction is orotidine 5'-phosphate + H(+) = UMP + CO2. The protein operates within pyrimidine metabolism; UMP biosynthesis via de novo pathway; UMP from orotate: step 2/2. Functionally, catalyzes the decarboxylation of orotidine 5'-monophosphate (OMP) to uridine 5'-monophosphate (UMP). The chain is Orotidine 5'-phosphate decarboxylase from Bacillus cereus (strain Q1).